A 468-amino-acid chain; its full sequence is Pituitary adenylate cyclase-activating polypeptide type I receptor (468 aa).

An N-terminal signal peptide occupies residues 1 to 20 (MAGVVHVSLAALLLLPMAPA). Residues 21 to 152 (MHSDCIFKKE…TGDQDYYYLS (132 aa)) are Extracellular-facing. 3 disulfide bridges follow: C34–C63, C54–C118, and C77–C134. N48, N60, and N117 each carry an N-linked (GlcNAc...) asparagine glycan. An important for ADCYAP1/PACAP ligand binding and specificity region spans residues 125 to 139 (EPFPHYFDACGFDEY). Residues 153–177 (VKALYTVGYSTSLVTLTTAMVILCR) traverse the membrane as a helical segment. The Cytoplasmic segment spans residues 178–187 (FRKLHCTRNF). A helical membrane pass occupies residues 188 to 208 (IHMNLFVSFMLRAISVFIKDW). At 209–223 (ILYAEQDSNHCFIST) the chain is on the extracellular side. A helical transmembrane segment spans residues 224–249 (VECKAVMVFFHYCVVSNYFWLFIEGL). An intrachain disulfide couples C226 to C296. Topologically, residues 250–267 (YLFTLLVETFFPERRYFY) are cytoplasmic. A helical transmembrane segment spans residues 268–290 (WYTIIGWGTPTVCVTVWATLRLY). Over 291 to 302 (FDDTGCWDMNDS) the chain is Extracellular. A glycan (N-linked (GlcNAc...) asparagine) is linked at N300. Residues 303 to 329 (TALWWVIKGPVVGSIMVNFVLFIGIIV) form a helical membrane-spanning segment. Residues 330–347 (ILVQKLQSPDMGGNESSI) are Cytoplasmic-facing. A helical membrane pass occupies residues 348 to 374 (YLRLARSTLLLIPLFGIHYTVFAFSPE). The N-linked (GlcNAc...) asparagine glycan is linked to N375. At 375-379 (NVSKR) the chain is on the extracellular side. Residues 380–403 (ERLVFELGLGSFQGFVVAVLYCFL) form a helical membrane-spanning segment. Residues 404–468 (NGEVQAEIKR…SGLPADNLAT (65 aa)) are Cytoplasmic-facing. S434 and S447 each carry phosphoserine.

Belongs to the G-protein coupled receptor 2 family. Interacts with maxadilan, a vasodilator peptide from Lutzomyia longipalpis saliva; the interaction results in ADCYAP1R1 activation. As to expression, most abundant in the brain, low expression in the lung, liver, thymus, spleen, pancreas and placenta.

It is found in the cell membrane. Several synthetic peptides derived from maxadilan, a vasodilator peptide from Lutzomyia longipalpis saliva, act as antagonists for ADCYAP1R1. Functionally, g protein-coupled receptor activated by the neuropeptide pituitary adenylate cyclase-activating polypeptide (ADCYAP1/PACAP). Binds both PACAP27 and PACAP38 bioactive peptides. Ligand binding causes a conformation change that triggers signaling via guanine nucleotide-binding proteins (G proteins) and modulates the activity of downstream effectors. Activates cAMP-dependent pathway. May regulate the release of adrenocorticotropin, luteinizing hormone, growth hormone, prolactin, epinephrine, and catecholamine. May play a role in spermatogenesis and sperm motility. Causes smooth muscle relaxation and secretion in the gastrointestinal tract. This is Pituitary adenylate cyclase-activating polypeptide type I receptor from Homo sapiens (Human).